The chain runs to 277 residues: Large ribosomal subunit protein uL2 (277 aa).

Residues 199–277 (DHMNTSIGKA…ILLSRHKRKK (79 aa)) are disordered. A compositionally biased stretch (basic residues) spans 209 to 220 (GRNRWLGRKPHN).

The protein belongs to the universal ribosomal protein uL2 family. In terms of assembly, part of the 50S ribosomal subunit. Forms a bridge to the 30S subunit in the 70S ribosome.

Its function is as follows. One of the primary rRNA binding proteins. Required for association of the 30S and 50S subunits to form the 70S ribosome, for tRNA binding and peptide bond formation. It has been suggested to have peptidyltransferase activity; this is somewhat controversial. Makes several contacts with the 16S rRNA in the 70S ribosome. The polypeptide is Large ribosomal subunit protein uL2 (Bradyrhizobium diazoefficiens (strain JCM 10833 / BCRC 13528 / IAM 13628 / NBRC 14792 / USDA 110)).